We begin with the raw amino-acid sequence, 77 residues long: NADH dehydrogenase [ubiquinone] 1 alpha subcomplex subunit 3 (77 aa).

A helical transmembrane segment spans residues 23–45; the sequence is IVGGSALALAGIVMATIGVANYY.

It belongs to the complex I NDUFA3 subunit family. In terms of assembly, complex I is composed of 43 different subunits.

Its subcellular location is the mitochondrion inner membrane. The protein resides in the cytoplasm. It is found in the myofibril. The protein localises to the sarcomere. It localises to the z line. Accessory subunit of the mitochondrial membrane respiratory chain NADH dehydrogenase (Complex I), that is believed not to be involved in catalysis. Complex I functions in the transfer of electrons from NADH to the respiratory chain. The immediate electron acceptor for the enzyme is believed to be ubiquinone. Required for the maintenance of muscle integrity and for cell proliferation in the wing imaginal disc epithelium, possibly by interacting with the chaperone-assisted selective autophagy (CASA) pathway. The chain is NADH dehydrogenase [ubiquinone] 1 alpha subcomplex subunit 3 from Drosophila melanogaster (Fruit fly).